Reading from the N-terminus, the 310-residue chain is HPr kinase/phosphorylase (310 aa).

Catalysis depends on residues His-138 and Lys-159. An ATP-binding site is contributed by 153–160 (GASGIGKS). Ser-160 is a Mg(2+) binding site. The Proton acceptor; for phosphorylation activity. Proton donor; for dephosphorylation activity role is filled by Asp-177. An important for the catalytic mechanism of both phosphorylation and dephosphorylation region spans residues 201–210 (IEIRGVGIID). Glu-202 is a Mg(2+) binding site. The active site involves Arg-243. Residues 264 to 269 (PVKTGR) form an important for the catalytic mechanism of dephosphorylation region.

This sequence belongs to the HPrK/P family. Homohexamer. The cofactor is Mg(2+).

The enzyme catalyses [HPr protein]-L-serine + ATP = [HPr protein]-O-phospho-L-serine + ADP + H(+). It catalyses the reaction [HPr protein]-O-phospho-L-serine + phosphate + H(+) = [HPr protein]-L-serine + diphosphate. In terms of biological role, catalyzes the ATP- as well as the pyrophosphate-dependent phosphorylation of a specific serine residue in HPr, a phosphocarrier protein of the phosphoenolpyruvate-dependent sugar phosphotransferase system (PTS). HprK/P also catalyzes the pyrophosphate-producing, inorganic phosphate-dependent dephosphorylation (phosphorolysis) of seryl-phosphorylated HPr (P-Ser-HPr). The two antagonistic activities of HprK/P are regulated by several intracellular metabolites, which change their concentration in response to the absence or presence of rapidly metabolisable carbon sources (glucose, fructose, etc.) in the growth medium. Therefore, by controlling the phosphorylation state of HPr, HPrK/P is a sensor enzyme that plays a major role in the regulation of carbon metabolism and sugar transport: it mediates carbon catabolite repression (CCR), and regulates PTS-catalyzed carbohydrate uptake and inducer exclusion. This Lactococcus lactis subsp. cremoris (strain SK11) protein is HPr kinase/phosphorylase.